A 1306-amino-acid polypeptide reads, in one-letter code: Activating transcription factor 7-interacting protein 1 (1306 aa).

Residue methionine 1 is modified to N-acetylmethionine. The segment at 1 to 23 (MDSVEEPQKKVFKARKTMRASDR) is disordered. A Glycyl lysine isopeptide (Lys-Gly) (interchain with G-Cter in SUMO2) cross-link involves residue lysine 33. A phosphoserine mark is found at serine 57 and serine 112. Disordered stretches follow at residues 104-470 (EDLN…SMET), 496-604 (LPVE…SKRR), 689-722 (AAKD…NNMT), 765-785 (VVSS…PAAP), 871-895 (PLPN…NSST), 920-1060 (RTSL…GPSQ), and 1152-1196 (AGPQ…STSL). 2 stretches are compositionally biased toward polar residues: residues 109–134 (EALS…SPAS) and 143–162 (VSDN…SDNP). Threonine 124 is subject to Phosphothreonine. Low complexity-rich tracts occupy residues 185-212 (EEPP…CSEP), 246-261 (EAAS…ASDE), and 284-303 (PSGD…LPRS). The segment covering 432–441 (QSEKDEHKSP) has biased composition (basic and acidic residues). A phosphoserine mark is found at serine 511, serine 514, serine 516, and serine 533. Residues 513–523 (GSPSKQESSEN) are compositionally biased toward polar residues. Basic and acidic residues-rich tracts occupy residues 557–566 (EGEKSEKDGK), 592–601 (KSEDMDSVES), and 689–699 (AAKDDLKKRQE). The short motif at 587 to 605 (RRKRSKSEDMDSVESKRRR) is the Nuclear localization signal element. Residue lysine 592 forms a Glycyl lysine isopeptide (Lys-Gly) (interchain with G-Cter in SUMO2) linkage. A Phosphoserine modification is found at serine 593. The segment at 596–851 (MDSVESKRRR…NQPSGNVEFI (256 aa)) is interaction with SETDB1. A coiled-coil region spans residues 666–696 (NKRHKAVLTELQAKIARLTKRFGAAKDDLKK). 2 positions are modified to phosphoserine: serine 700 and serine 707. Polar residues predominate over residues 713–722 (NDTNSNNNMT). The span at 871–884 (PLPNPTKPNIPSVP) shows a compositional bias: pro residues. Serine 933 is modified (phosphoserine). Residues lysine 944 and lysine 974 each participate in a glycyl lysine isopeptide (Lys-Gly) (interchain with G-Cter in SUMO2) cross-link. Polar residues predominate over residues 948–981 (STFSPPSSAEQNSSATPRIVTENQTNKTVDSSIN). The span at 987–1000 (STSQSGKASSSDSS) shows a compositional bias: low complexity. The interaction with SUMO stretch occupies residues 1001 to 1011 (GVIDLTMDDEE). Low complexity predominate over residues 1022–1040 (SPPSSSTVSTSQPMSRPLQ). Positions 1054-1143 (PTSGPSQATI…RVPQTTTYVV (90 aa)) constitute a Fibronectin type-III 1 domain. The segment covering 1170-1187 (PRPLHPAPLPEAPQPQRL) has biased composition (pro residues). Positions 1190 to 1306 (EAASTSLPQK…TDVISSSQNS (117 aa)) are interaction with MBD1. Positions 1196–1302 (LPQKPHLKLA…DPQSTDVISS (107 aa)) constitute a Fibronectin type-III 2 domain.

Belongs to the MCAF family. As to quaternary structure, interacts with MBD1; the interaction is enhanced when MBD1 is sumoylated. Interacts with SETDB1; the interaction protects SETDB1 from proteasomal degradation and is required to stimulate histone methyltransferase activity and facilitate the conversion of dimethylated to trimethylated H3 'Lys-9'. Interacts with SUMO ubiquitin-like proteins (SUMO1, SUNO2 and SUMO3), with a preference for SUMO2 and SUMO3. Interacts with SP1, ATF7 and ZHX1. Interacts with the general transcription machinery, including ERCC2, ERCC3, GTF2E1, GTF2E2 and POLR2A. In terms of tissue distribution, ubiquitously expressed at all stages studied.

Its subcellular location is the nucleus. Its function is as follows. Recruiter that couples transcriptional factors to general transcription apparatus and thereby modulates transcription regulation and chromatin formation. Can both act as an activator or a repressor depending on the context. Required for HUSH-mediated heterochromatin formation and gene silencing. Mediates MBD1-dependent transcriptional repression, probably by recruiting complexes containing SETDB1. Stabilizes SETDB1, is required to stimulate histone methyltransferase activity of SETDB1 and facilitates the conversion of dimethylated to trimethylated H3 'Lys-9' (H3K9me3). The complex formed with MBD1 and SETDB1 represses transcription and couples DNA methylation and histone H3 'Lys-9' trimethylation (H3K9me3). Facilitates telomerase TERT and TERC gene expression by SP1 in cancer cells. The polypeptide is Activating transcription factor 7-interacting protein 1 (Atf7ip) (Mus musculus (Mouse)).